Here is a 582-residue protein sequence, read N- to C-terminus: 2-(3-amino-3-carboxypropyl)histidine synthase subunit 2 (582 aa).

[4Fe-4S] cluster-binding residues include C145, C166, and C398.

It belongs to the DPH1/DPH2 family. DPH2 subfamily. In terms of assembly, component of the 2-(3-amino-3-carboxypropyl)histidine synthase complex composed of DPH1, DPH2, DPH3 and a NADH-dependent reductase, predominantly CBR1. [4Fe-4S] cluster is required as a cofactor.

The protein resides in the cytoplasm. It participates in protein modification; peptidyl-diphthamide biosynthesis. Its function is as follows. Required for the first step of diphthamide biosynthesis, a post-translational modification of histidine which occurs in elongation factor 2. DPH1 and DPH2 transfer a 3-amino-3-carboxypropyl (ACP) group from S-adenosyl-L-methionine (SAM) to a histidine residue, the reaction is assisted by a reduction system comprising DPH3 and a NADH-dependent reductase, predominantly CBR1. Facilitates the reduction of the catalytic iron-sulfur cluster found in the DPH1 subunit. This is 2-(3-amino-3-carboxypropyl)histidine synthase subunit 2 (DPH2) from Eremothecium gossypii (strain ATCC 10895 / CBS 109.51 / FGSC 9923 / NRRL Y-1056) (Yeast).